The following is a 2345-amino-acid chain: Acetyl-CoA carboxylase 1 (2345 aa).

Methionine 1 is modified (N-acetylmethionine). 8 positions are modified to phosphoserine: serine 5, serine 23, serine 25, serine 29, serine 34, serine 47, serine 49, and serine 52. The residue at position 57 (threonine 57) is a Phosphothreonine. Serine 77 carries the phosphoserine modification. Serine 79 carries the phosphoserine; by AMPK modification. Positions 116–617 (VIEKVLIANN…DTGWLDRLIA (502 aa)) constitute a Biotin carboxylation domain. The region spanning 274–465 (SKRILNVPQD…LPAAQLQIAM (192 aa)) is the ATP-grasp domain. 314-319 (GGGGKG) lines the ATP pocket. Mg(2+) is bound by residues glutamate 423, glutamate 436, and asparagine 438. Residues glutamate 423, glutamate 436, and asparagine 438 each contribute to the Mn(2+) site. Residue arginine 440 is part of the active site. Threonine 609 bears the Phosphothreonine mark. In terms of domain architecture, Biotinyl-binding spans 744–818 (FEKENDPSVM…DPGCVIAKMQ (75 aa)). Lysine 785 bears the N6-biotinyllysine mark. Serine 834 carries the post-translational modification Phosphoserine. Phosphoserine; by AMPK; in vitro occurs at positions 1200 and 1215. Serine 1217 is subject to Phosphoserine. Threonine 1226 carries the post-translational modification Phosphothreonine. A phosphoserine mark is found at serine 1258, serine 1262, and serine 1272. Lysine 1333 carries the post-translational modification N6-acetyllysine. The region spanning 1575–1913 (PYVTKDLLQS…NVHSSVPLLN (339 aa)) is the CoA carboxyltransferase N-terminal domain. Residues 1575 to 2233 (PYVTKDLLQS…EDLVKKKIHS (659 aa)) form a carboxyltransferase region. Positions 1822, 2126, and 2128 each coordinate CoA. The CoA carboxyltransferase C-terminal domain maps to 1917-2233 (PIDRIIEFVP…EDLVKKKIHS (317 aa)). A Phosphothreonine modification is found at threonine 2152.

As to quaternary structure, monomer, homodimer, and homotetramer. Can form filamentous polymers. Interacts in its inactive phosphorylated form with the BRCT domains of BRCA1 which prevents ACACA dephosphorylation and inhibits lipid synthesis. Interacts with MID1IP1; interaction with MID1IP1 promotes oligomerization and increases its activity. It depends on Mg(2+) as a cofactor. Requires Mn(2+) as cofactor. Biotin is required as a cofactor. Post-translationally, the N-terminus is blocked. Phosphorylation on Ser-1262 is required for interaction with BRCA1. In terms of processing, phosphorylation at Ser-79 by AMPK inactivates enzyme activity. Phosphorylated in vitro at Ser-1200 and Ser-1215 by AMPK; the relevance of phosphorylation of these sites in vivo is however unclear. Post-translationally, the biotin cofactor is covalently attached to the central biotinyl-binding domain and is required for the catalytic activity.

It localises to the cytoplasm. It is found in the cytosol. The catalysed reaction is hydrogencarbonate + acetyl-CoA + ATP = malonyl-CoA + ADP + phosphate + H(+). Its pathway is lipid metabolism; malonyl-CoA biosynthesis; malonyl-CoA from acetyl-CoA: step 1/1. Its activity is regulated as follows. Inhibited by phosphorylation. Citrate promotes oligomerization of the protein into filaments that correspond to the most active form of the carboxylase. Its function is as follows. Cytosolic enzyme that catalyzes the carboxylation of acetyl-CoA to malonyl-CoA, the first and rate-limiting step of de novo fatty acid biosynthesis. This is a 2 steps reaction starting with the ATP-dependent carboxylation of the biotin carried by the biotin carboxyl carrier (BCC) domain followed by the transfer of the carboxyl group from carboxylated biotin to acetyl-CoA. In Rattus norvegicus (Rat), this protein is Acetyl-CoA carboxylase 1.